The primary structure comprises 247 residues: Sugar fermentation stimulation protein homolog (247 aa).

It belongs to the SfsA family.

This is Sugar fermentation stimulation protein homolog from Aeromonas salmonicida (strain A449).